The primary structure comprises 208 residues: Ribonuclease HII (208 aa).

The 190-residue stretch at 12 to 201 (ELVAGVDEVG…VRALLEPVAV (190 aa)) folds into the RNase H type-2 domain. Residues Asp18, Glu19, and Asp110 each coordinate a divalent metal cation.

It belongs to the RNase HII family. Mn(2+) serves as cofactor. Mg(2+) is required as a cofactor.

The protein resides in the cytoplasm. The enzyme catalyses Endonucleolytic cleavage to 5'-phosphomonoester.. Its function is as follows. Endonuclease that specifically degrades the RNA of RNA-DNA hybrids. The protein is Ribonuclease HII of Ectopseudomonas mendocina (strain ymp) (Pseudomonas mendocina).